The chain runs to 120 residues: uncharacterized protein (120 aa).

It belongs to the HesB/IscA family.

This is an uncharacterized protein from Bacillus subtilis (strain 168).